A 212-amino-acid chain; its full sequence is uncharacterized protein (212 aa).

Positions 47–129 (RELLDRRRSQ…GNIDNGQPRR (83 aa)) are disordered.

This is an uncharacterized protein from Caenorhabditis elegans.